We begin with the raw amino-acid sequence, 2999 residues long: TPR and ankyrin repeat-containing protein 1 (2999 aa).

Positions 1 to 87 (MASTTAGRRW…QPRGSTDSAC (87 aa)) are disordered. Low complexity predominate over residues 19-36 (RGPTPRSRAPGAKLSAPE). TPR repeat units follow at residues 144-177 (AMLL…DPTY) and 179-211 (KGYY…LQRS). ANK repeat units follow at residues 297-327 (EKYV…NIET), 328-361 (IGPN…EWKE), 369-405 (AGCT…DPTL), 538-567 (SQDR…DPRS), 572-593 (EGDT…DIGF), and 621-654 (NGNT…NFNL). 4 disordered regions span residues 684–722 (RRKN…LPCG), 773–831 (MPLP…GASQ), 1151–1211 (LEVE…GCVP), and 1318–1344 (WEED…QTGD). Composition is skewed to polar residues over residues 699-717 (SRSS…TSFK) and 801-815 (TQRM…NNPV). Basic and acidic residues predominate over residues 1151–1164 (LEVEPGKEGPGREE). Residues 1318–1327 (WEEDDEEVEA) are compositionally biased toward acidic residues. TPR repeat units lie at residues 1772-1805 (PYEW…EKEK) and 1866-1899 (LGKI…DLAL).

As to expression, expressed only in the brain. Detected in the hippocampus, hypothalamus and cingulate gyrus.

This Mus musculus (Mouse) protein is TPR and ankyrin repeat-containing protein 1 (Trank1).